Reading from the N-terminus, the 234-residue chain is Ammonia monooxygenase gamma subunit (234 aa).

Residues 1–20 (MRMIKFLLLAILLAPFVAHS) form the signal peptide. The 156-residue stretch at 38–193 (ESLQRGAKGF…RFVADLVNYM (156 aa)) folds into the Cytochrome c domain. 3 residues coordinate heme c: cysteine 51, cysteine 54, and histidine 55. Residues 206-226 (ELGITVLLFLFGMLGLTYLLK) traverse the membrane as a helical segment.

It belongs to the cytochrome c family. As to quaternary structure, the soluble ammonia monooxygenase is a nonamer composed of three alpha subunits (AmoA), three beta subunits (AmoB) and three gamma subunits (Cytochrome c1 PetC). The cofactor is heme c.

It is found in the cell membrane. The protein localises to the cytoplasm. Functionally, part of the ammonia monooxygenase complex, which catalyzes the oxidation of ammonia to hydroxylamine, the first reaction in the process of ammonia oxidation to nitrite. The protein is Ammonia monooxygenase gamma subunit of Nitrosomonas europaea (strain ATCC 19718 / CIP 103999 / KCTC 2705 / NBRC 14298).